The sequence spans 367 residues: Leucine carboxyl methyltransferase 1 (367 aa).

Residues R84, G109, D132, D187–L188, and E212 each bind S-adenosyl-L-methionine.

It belongs to the methyltransferase superfamily. LCMT family.

The enzyme catalyses [phosphatase 2A protein]-C-terminal L-leucine + S-adenosyl-L-methionine = [phosphatase 2A protein]-C-terminal L-leucine methyl ester + S-adenosyl-L-homocysteine. Methylates the carboxyl group of the C-terminal leucine residue of protein phosphatase 2A catalytic subunits to form alpha-leucine ester residues. This is Leucine carboxyl methyltransferase 1 (PPM1) from Candida albicans (strain SC5314 / ATCC MYA-2876) (Yeast).